We begin with the raw amino-acid sequence, 205 residues long: MVNLAAMVWRRLLRKRWVLALVFGLSLVYFLTSTFKQEERAVRDRNLLQVQDHDQPIPWKVQFNLGNSSRPSNQCRNSIQGKHLITDELGYVCERRDLLVNGCCNVNVPGTKQYCCDGCLSSGCCSAYEYCVSCCLQPNKQLLLERFLNRAAVAFQNLFMAVEDHFELCLAKCRTSSQSVQHENTYRDPIAKYCYGESPPELFPA.

Topologically, residues 1–16 (MVNLAAMVWRRLLRKR) are cytoplasmic. A helical membrane pass occupies residues 17–35 (WVLALVFGLSLVYFLTSTF). Residues 36-205 (KQEERAVRDR…GESPPELFPA (170 aa)) lie on the Lumenal side of the membrane. Asparagine 67 is a glycosylation site (N-linked (GlcNAc...) asparagine).

This sequence belongs to the SPRING family. In terms of assembly, interacts with SCAP.

Its subcellular location is the golgi apparatus membrane. Positively regulates hepatic SREBP signaling pathway by modulating the proper localization of SCAP (SREBP cleavage-activating protein) to the endoplasmic reticulum, thereby controlling the level of functional SCAP. The chain is SREBP regulating gene protein from Bos taurus (Bovine).